The sequence spans 585 residues: Arginine--tRNA ligase (585 aa).

The 'HIGH' region signature appears at P126–H136.

Belongs to the class-I aminoacyl-tRNA synthetase family. As to quaternary structure, monomer.

Its subcellular location is the cytoplasm. The enzyme catalyses tRNA(Arg) + L-arginine + ATP = L-arginyl-tRNA(Arg) + AMP + diphosphate. This chain is Arginine--tRNA ligase, found in Trichodesmium erythraeum (strain IMS101).